A 355-amino-acid chain; its full sequence is Protein-glutamate methylesterase/protein-glutamine glutaminase (355 aa).

The Response regulatory domain maps to 3–121 (NVLVVEDSPV…HPDHEATARK (119 aa)). At Asp-54 the chain carries 4-aspartylphosphate. The 195-residue stretch at 154–348 (PLLNRVAPAR…AALTNLVAER (195 aa)) folds into the CheB-type methylesterase domain. Catalysis depends on residues Ser-170, His-197, and Asp-290.

This sequence belongs to the CheB family. In terms of processing, phosphorylated by CheA. Phosphorylation of the N-terminal regulatory domain activates the methylesterase activity.

It localises to the cytoplasm. It catalyses the reaction [protein]-L-glutamate 5-O-methyl ester + H2O = L-glutamyl-[protein] + methanol + H(+). The enzyme catalyses L-glutaminyl-[protein] + H2O = L-glutamyl-[protein] + NH4(+). In terms of biological role, involved in chemotaxis. Part of a chemotaxis signal transduction system that modulates chemotaxis in response to various stimuli. Catalyzes the demethylation of specific methylglutamate residues introduced into the chemoreceptors (methyl-accepting chemotaxis proteins or MCP) by CheR. Also mediates the irreversible deamidation of specific glutamine residues to glutamic acid. The protein is Protein-glutamate methylesterase/protein-glutamine glutaminase of Nitrosospira multiformis (strain ATCC 25196 / NCIMB 11849 / C 71).